The primary structure comprises 119 residues: Beta-2-microglobulin (119 aa).

The first 20 residues, 1–20 (MARFVVVPLLVLLSLFGLEA), serve as a signal peptide directing secretion. Residues 25–114 (PKIQVYSRYP…VTFSTPKTVK (90 aa)) enclose the Ig-like C1-type domain. Residues cysteine 45 and cysteine 100 are joined by a disulfide bond.

It belongs to the beta-2-microglobulin family. As to quaternary structure, heterodimer of an alpha chain and a beta chain. Beta-2-microglobulin is the beta-chain of major histocompatibility complex class I molecules.

The protein resides in the secreted. Functionally, component of the class I major histocompatibility complex (MHC). Involved in the presentation of peptide antigens to the immune system. The chain is Beta-2-microglobulin (B2M) from Saguinus bicolor bicolor (Pied bare-faced tamarin).